We begin with the raw amino-acid sequence, 546 residues long: Chaperonin GroEL 1 (546 aa).

ATP-binding positions include 30-33 (TLGP), lysine 51, 87-91 (DGTTT), glycine 415, 479-481 (NAA), and aspartate 495.

The protein belongs to the chaperonin (HSP60) family. In terms of assembly, forms a cylinder of 14 subunits composed of two heptameric rings stacked back-to-back. Interacts with the co-chaperonin GroES.

Its subcellular location is the cytoplasm. It carries out the reaction ATP + H2O + a folded polypeptide = ADP + phosphate + an unfolded polypeptide.. Functionally, together with its co-chaperonin GroES, plays an essential role in assisting protein folding. The GroEL-GroES system forms a nano-cage that allows encapsulation of the non-native substrate proteins and provides a physical environment optimized to promote and accelerate protein folding. This Vibrio vulnificus (strain CMCP6) protein is Chaperonin GroEL 1.